The chain runs to 332 residues: Beta-ketoacyl-[acyl-carrier-protein] synthase III (332 aa).

Catalysis depends on residues Cys-114 and His-255. Residues 256–260 are ACP-binding; it reads QANLR. Asn-285 is a catalytic residue.

The protein belongs to the thiolase-like superfamily. FabH family. As to quaternary structure, homodimer.

It localises to the cytoplasm. The catalysed reaction is malonyl-[ACP] + acetyl-CoA + H(+) = 3-oxobutanoyl-[ACP] + CO2 + CoA. The protein operates within lipid metabolism; fatty acid biosynthesis. In terms of biological role, catalyzes the condensation reaction of fatty acid synthesis by the addition to an acyl acceptor of two carbons from malonyl-ACP. Catalyzes the first condensation reaction which initiates fatty acid synthesis and may therefore play a role in governing the total rate of fatty acid production. Possesses both acetoacetyl-ACP synthase and acetyl transacylase activities. Its substrate specificity determines the biosynthesis of branched-chain and/or straight-chain of fatty acids. This is Beta-ketoacyl-[acyl-carrier-protein] synthase III from Sulfurimonas denitrificans (strain ATCC 33889 / DSM 1251) (Thiomicrospira denitrificans (strain ATCC 33889 / DSM 1251)).